The chain runs to 349 residues: Phosphoribosylformylglycinamidine cyclo-ligase (349 aa).

It belongs to the AIR synthase family.

It localises to the cytoplasm. The catalysed reaction is 2-formamido-N(1)-(5-O-phospho-beta-D-ribosyl)acetamidine + ATP = 5-amino-1-(5-phospho-beta-D-ribosyl)imidazole + ADP + phosphate + H(+). It functions in the pathway purine metabolism; IMP biosynthesis via de novo pathway; 5-amino-1-(5-phospho-D-ribosyl)imidazole from N(2)-formyl-N(1)-(5-phospho-D-ribosyl)glycinamide: step 2/2. This Psychrobacter cryohalolentis (strain ATCC BAA-1226 / DSM 17306 / VKM B-2378 / K5) protein is Phosphoribosylformylglycinamidine cyclo-ligase.